Consider the following 479-residue polypeptide: GTPase Der (479 aa).

EngA-type G domains follow at residues 3-166 (PVVA…AEEY) and 192-365 (LKLA…ASAT). GTP is bound by residues 9–16 (GRPNVGKS), 56–60 (DTGGI), 118–121 (NKID), 198–205 (GRPNVGKS), 245–249 (DTAGV), and 310–313 (NKWD). In terms of domain architecture, KH-like spans 366 to 450 (QRISTSKLTK…PIKVEFREPV (85 aa)).

Belongs to the TRAFAC class TrmE-Era-EngA-EngB-Septin-like GTPase superfamily. EngA (Der) GTPase family. As to quaternary structure, associates with the 50S ribosomal subunit.

Its function is as follows. GTPase that plays an essential role in the late steps of ribosome biogenesis. This Idiomarina loihiensis (strain ATCC BAA-735 / DSM 15497 / L2-TR) protein is GTPase Der.